The chain runs to 203 residues: Somatotropin (203 aa).

Positions 1 to 17 (MNRVILLLSVMCVGVSS) are cleaved as a signal peptide. Gln18 carries the pyrrolidone carboxylic acid modification. 2 disulfides stabilise this stretch: Cys68–Cys176 and Cys193–Cys201.

Belongs to the somatotropin/prolactin family.

The protein localises to the secreted. Functionally, growth hormone plays an important role in growth control and is involved in the regulation of several anabolic processes. Implicated as an osmoregulatory substance important for seawater adaptation. The protein is Somatotropin (gh) of Verasper variegatus (Spotted flounder).